The following is a 289-amino-acid chain: Nucleotide-binding protein CHY_0272 (289 aa).

ATP is bound at residue 8–15 (GLSGAGKT). 59–62 (DVRG) lines the GTP pocket.

It belongs to the RapZ-like family.

In terms of biological role, displays ATPase and GTPase activities. In Carboxydothermus hydrogenoformans (strain ATCC BAA-161 / DSM 6008 / Z-2901), this protein is Nucleotide-binding protein CHY_0272.